The sequence spans 192 residues: Probable protein adenylyltransferase y4lH (192 aa).

The Fido domain maps to 52-190 (LDFAHYRALH…LAPLAAEIRR (139 aa)). ATP-binding positions include 82–83 (KG) and 139–141 (GNG).

Belongs to the fic family.

It carries out the reaction L-tyrosyl-[protein] + ATP = O-(5'-adenylyl)-L-tyrosyl-[protein] + diphosphate. The catalysed reaction is L-threonyl-[protein] + ATP = 3-O-(5'-adenylyl)-L-threonyl-[protein] + diphosphate. Probable adenylyltransferase that mediates the addition of adenosine 5'-monophosphate (AMP) to specific residues of target proteins. The chain is Probable protein adenylyltransferase y4lH from Sinorhizobium fredii (strain NBRC 101917 / NGR234).